A 596-amino-acid chain; its full sequence is Aspartate--tRNA(Asp/Asn) ligase (596 aa).

Residue E182 participates in L-aspartate binding. The aspartate stretch occupies residues 206–209; sequence QLFK. R228 is a binding site for L-aspartate. ATP is bound by residues 228-230 and Q237; that span reads RDE. H456 contributes to the L-aspartate binding site. E490 is a binding site for ATP. R497 provides a ligand contact to L-aspartate. 542 to 545 contacts ATP; sequence GLDR.

Belongs to the class-II aminoacyl-tRNA synthetase family. Type 1 subfamily. In terms of assembly, homodimer.

It is found in the cytoplasm. The enzyme catalyses tRNA(Asx) + L-aspartate + ATP = L-aspartyl-tRNA(Asx) + AMP + diphosphate. Functionally, aspartyl-tRNA synthetase with relaxed tRNA specificity since it is able to aspartylate not only its cognate tRNA(Asp) but also tRNA(Asn). Reaction proceeds in two steps: L-aspartate is first activated by ATP to form Asp-AMP and then transferred to the acceptor end of tRNA(Asp/Asn). The protein is Aspartate--tRNA(Asp/Asn) ligase of Syntrophotalea carbinolica (strain DSM 2380 / NBRC 103641 / GraBd1) (Pelobacter carbinolicus).